The chain runs to 357 residues: Elongation factor Ts (357 aa).

The interval 82–85 (TDFV) is involved in Mg(2+) ion dislocation from EF-Tu.

Belongs to the EF-Ts family.

The protein resides in the cytoplasm. Associates with the EF-Tu.GDP complex and induces the exchange of GDP to GTP. It remains bound to the aminoacyl-tRNA.EF-Tu.GTP complex up to the GTP hydrolysis stage on the ribosome. The sequence is that of Elongation factor Ts from Campylobacter jejuni subsp. jejuni serotype O:6 (strain 81116 / NCTC 11828).